Consider the following 252-residue polypeptide: Carboxy-S-adenosyl-L-methionine synthase (252 aa).

S-adenosyl-L-methionine is bound by residues Tyr-45, 70-72 (GCS), 95-96 (DN), 123-124 (DI), Asn-138, and Arg-205.

This sequence belongs to the class I-like SAM-binding methyltransferase superfamily. Cx-SAM synthase family. In terms of assembly, homodimer.

It carries out the reaction prephenate + S-adenosyl-L-methionine = carboxy-S-adenosyl-L-methionine + 3-phenylpyruvate + H2O. Its function is as follows. Catalyzes the conversion of S-adenosyl-L-methionine (SAM) to carboxy-S-adenosyl-L-methionine (Cx-SAM). This Photorhabdus laumondii subsp. laumondii (strain DSM 15139 / CIP 105565 / TT01) (Photorhabdus luminescens subsp. laumondii) protein is Carboxy-S-adenosyl-L-methionine synthase.